Consider the following 227-residue polypeptide: Riboflavin kinase (227 aa).

The H-T-H motif-like stretch occupies residues 1 to 92 (MSKDYEVFPL…LKRTIDSSTF (92 aa)). The segment at 93–227 (LTLRGYVVPG…GDKVEVVIPV (135 aa)) is riboflavin kinase. 102–107 (GLGEGA) is a binding site for CDP. Residues T131 and N133 each contribute to the Mg(2+) site. T194 and E202 together coordinate FMN. Residue 207–210 (VRLR) coordinates CDP.

This sequence belongs to the archaeal riboflavin kinase family. Requires Mg(2+) as cofactor.

It carries out the reaction riboflavin + CTP = CDP + FMN + H(+). The protein operates within cofactor biosynthesis; FMN biosynthesis; FMN from riboflavin (CTP route): step 1/1. Functionally, catalyzes the CTP-dependent phosphorylation of riboflavin (vitamin B2) to form flavin mononucleotide (FMN). This Thermofilum pendens (strain DSM 2475 / Hrk 5) protein is Riboflavin kinase (ribK).